Reading from the N-terminus, the 199-residue chain is Imidazole glycerol phosphate synthase subunit HisH (199 aa).

The 197-residue stretch at 3-199 folds into the Glutamine amidotransferase type-1 domain; that stretch reads NITIIDTGCA…LKNFVEKVPF (197 aa). Cys-78 serves as the catalytic Nucleophile. Active-site residues include His-178 and Glu-180.

Heterodimer of HisH and HisF.

It localises to the cytoplasm. It carries out the reaction 5-[(5-phospho-1-deoxy-D-ribulos-1-ylimino)methylamino]-1-(5-phospho-beta-D-ribosyl)imidazole-4-carboxamide + L-glutamine = D-erythro-1-(imidazol-4-yl)glycerol 3-phosphate + 5-amino-1-(5-phospho-beta-D-ribosyl)imidazole-4-carboxamide + L-glutamate + H(+). The enzyme catalyses L-glutamine + H2O = L-glutamate + NH4(+). It participates in amino-acid biosynthesis; L-histidine biosynthesis; L-histidine from 5-phospho-alpha-D-ribose 1-diphosphate: step 5/9. Its function is as follows. IGPS catalyzes the conversion of PRFAR and glutamine to IGP, AICAR and glutamate. The HisH subunit catalyzes the hydrolysis of glutamine to glutamate and ammonia as part of the synthesis of IGP and AICAR. The resulting ammonia molecule is channeled to the active site of HisF. The sequence is that of Imidazole glycerol phosphate synthase subunit HisH from Haemophilus influenzae (strain 86-028NP).